Here is a 154-residue protein sequence, read N- to C-terminus: Snaclec agglucetin subunit alpha-1 (154 aa).

Positions 1–23 are cleaved as a signal peptide; that stretch reads MGRFIFVSFGLLVVFLSLSGTGA. 3 disulfides stabilise this stretch: Cys27–Cys38, Cys55–Cys150, and Cys125–Cys142. In terms of domain architecture, C-type lectin spans 34–151; it reads YDQSCYRVFK…CGSEYAFVCK (118 aa). N-linked (GlcNAc...) asparagine glycosylation occurs at Asn116.

Belongs to the snaclec family. In terms of assembly, heterotetramer of the subunits alpha-1, alpha-2, beta-1 and beta-2; disulfide-linked. Expressed by the venom gland.

It localises to the secreted. Functionally, agglucetin specifically causes platelet aggregation and surface exposure of integrin alpha-IIb/beta-3 with a GPIb-(GP1BA-) dependent manner in washed platelets. It binds to human platelets in a saturable manner, and its binding is specifically blocked by anti-GP Ib mAb. It regulates endothelial cell survival and promotes angiogenesis by activating integrin alpha-v/beta-3 signaling through FAK/phosphatidylinositol 3-kinase (PI3K)/Akt pathway. This Deinagkistrodon acutus (Hundred-pace snake) protein is Snaclec agglucetin subunit alpha-1.